Here is a 128-residue protein sequence, read N- to C-terminus: Fluoride-specific ion channel FluC (128 aa).

Helical transmembrane passes span 5 to 25 (IVAIFVGAGLGAVLRWFLGLA), 35 to 55 (LGTLAANLLGGYAIGIAAVVF), 67 to 87 (LFVITGFLGGLTTFSTYSVEV), and 96 to 116 (FGWAFAVAVLHLTGSFTLTAL). Positions 75 and 78 each coordinate Na(+).

This sequence belongs to the fluoride channel Fluc/FEX (TC 1.A.43) family.

It is found in the cell inner membrane. The catalysed reaction is fluoride(in) = fluoride(out). Na(+) is not transported, but it plays an essential structural role and its presence is essential for fluoride channel function. Functionally, fluoride-specific ion channel. Important for reducing fluoride concentration in the cell, thus reducing its toxicity. The polypeptide is Fluoride-specific ion channel FluC (Burkholderia vietnamiensis (strain G4 / LMG 22486) (Burkholderia cepacia (strain R1808))).